Here is a 514-residue protein sequence, read N- to C-terminus: Probable cytochrome P450 6w1 (514 aa).

Residue Cys450 participates in heme binding.

It belongs to the cytochrome P450 family. Heme is required as a cofactor.

The protein localises to the endoplasmic reticulum membrane. It is found in the microsome membrane. May be involved in the metabolism of insect hormones and in the breakdown of synthetic insecticides. The polypeptide is Probable cytochrome P450 6w1 (Cyp6w1) (Drosophila melanogaster (Fruit fly)).